A 384-amino-acid polypeptide reads, in one-letter code: Na(+)/H(+) antiporter NhaA (384 aa).

A run of 11 helical transmembrane segments spans residues 17–37, 53–73, 89–109, 118–138, 147–167, 171–191, 198–218, 251–271, 283–303, 321–341, and 354–374; these read SGLFLISCTLFSLVIANSAIA, LEYWINDGLMTIFFLLIGLEL, MLPIFGAIGGMIVPAGLFLVM, GAGIPMATDIAFALAILSLLG, IFLTALAVIDDLGAILIIAVF, TLLWTNLCIALGIFGFLLILN, LIPYLIGGVFMWYFMLHSGVH, PVAFFILPLFALANTAIVLSS, IGIALGLIIGKPLGIFLLSML, ILAVGFLGGIGFTMSIFITLL, and FVILISSLIAGIIGYFSLKYV.

Belongs to the NhaA Na(+)/H(+) (TC 2.A.33) antiporter family.

The protein localises to the cell inner membrane. The enzyme catalyses Na(+)(in) + 2 H(+)(out) = Na(+)(out) + 2 H(+)(in). In terms of biological role, na(+)/H(+) antiporter that extrudes sodium in exchange for external protons. This is Na(+)/H(+) antiporter NhaA from Flavobacterium psychrophilum (strain ATCC 49511 / DSM 21280 / CIP 103535 / JIP02/86).